We begin with the raw amino-acid sequence, 343 residues long: UDP-3-O-acylglucosamine N-acyltransferase 2 (343 aa).

Catalysis depends on His-251, which acts as the Proton acceptor.

The protein belongs to the transferase hexapeptide repeat family. LpxD subfamily. In terms of assembly, homotrimer.

It carries out the reaction a UDP-3-O-[(3R)-3-hydroxyacyl]-alpha-D-glucosamine + a (3R)-hydroxyacyl-[ACP] = a UDP-2-N,3-O-bis[(3R)-3-hydroxyacyl]-alpha-D-glucosamine + holo-[ACP] + H(+). Its pathway is bacterial outer membrane biogenesis; LPS lipid A biosynthesis. Functionally, catalyzes the N-acylation of UDP-3-O-acylglucosamine using 3-hydroxyacyl-ACP as the acyl donor. Is involved in the biosynthesis of lipid A, a phosphorylated glycolipid that anchors the lipopolysaccharide to the outer membrane of the cell. This chain is UDP-3-O-acylglucosamine N-acyltransferase 2, found in Legionella pneumophila subsp. pneumophila (strain Philadelphia 1 / ATCC 33152 / DSM 7513).